The following is a 625-amino-acid chain: MDPEGTPGEGVGCTGWFNVEAIVERKTGDVVSEDEDDTEDTGIDLVDFIDDTCGSVQTGDEAPGALLHAQETQAHAEAVQVLKRKFVGSPAVSPLGNYNPCVDRDLSPRLNEISLNQGSGQAKRRLFLPDSGYGNTEVETSLLQVAGGGGQDVQAGGKENTRPDDGGGDATQLLRCSNLKATLLSKFKSVYGVSFSELVRSFKSDRTTCADWVVGAAGVHHSVAEGLKQLIQPFCSYAHIQCLTCDWGVYLLLLARFKCGKNRLTVSKCMSTLLNVQETHMLIEPPKLRSAAAALYWYRTGISNVSEVIGETPEWITRQTMFQHGLEDSIFDLSEMVQWAYDHDFTDDSVIAYEYAQLAGIDSNAAAFLKSNAQAKYVKDCATMCRHYKRAERQQMTMSQWIKQRCEKTDDGGDWRPIVQFLRYQGVEFIAFLAALKLFLKGIPKKNCIVLFGPPNTGKSYFGMSLIHFLQGSIISYVNSNSHFWLQPLADAKVAMLDDATPQCWSYIDNYLRNALDGNPISVDRKHKNLVQMKCPPLLITSNTNAGQDDRWMYLHSRMVVFTFEQPFPFDQNGNPVYELNDKNWKSFFSRTWSRLDLQEEEETENDGSTCRAFKCVAGQNLRTV.

The short motif at 83 to 85 (KRK) is the Nuclear localization signal element. Phosphoserine; by host is present on residues Ser89, Ser93, and Ser107. A Nuclear export signal motif is present at residues 106–115 (LSPRLNEISL). Residues 147-169 (GGGGQDVQAGGKENTRPDDGGGD) form a disordered region. The interval 162 to 328 (RPDDGGGDAT…QTMFQHGLED (167 aa)) is DNA-binding region. Residues 427–577 (VEFIAFLAAL…FPFDQNGNPV (151 aa)) enclose the SF3 helicase domain. 453–460 (GPPNTGKS) is an ATP binding site. Lys534 is covalently cross-linked (Glycyl lysine isopeptide (Lys-Gly) (interchain with G-Cter in SUMO)).

This sequence belongs to the papillomaviridae E1 protein family. Can form hexamers. Interacts with E2 protein; this interaction increases E1 DNA binding specificity. Interacts with host DNA polymerase subunit POLA2. Interacts with host single stranded DNA-binding protein RPA1. Interacts with host TOP1; this interaction stimulates the enzymatic activity of TOP1. Post-translationally, phosphorylated. Sumoylated.

The protein localises to the host nucleus. It carries out the reaction Couples ATP hydrolysis with the unwinding of duplex DNA by translocating in the 3'-5' direction.. The catalysed reaction is ATP + H2O = ADP + phosphate + H(+). ATP-dependent DNA 3'-5' helicase required for initiation of viral DNA replication. It forms a complex with the viral E2 protein. The E1-E2 complex binds to the replication origin which contains binding sites for both proteins. During the initial step, a dimer of E1 interacts with a dimer of protein E2 leading to a complex that binds the viral origin of replication with high specificity. Then, a second dimer of E1 displaces the E2 dimer in an ATP-dependent manner to form the E1 tetramer. Following this, two E1 monomers are added to each half of the site, which results in the formation of two E1 trimers on the viral ori. Subsequently, two hexamers will be created. The double hexamer acts as a bi-directional helicase machinery and unwinds the viral DNA and then recruits the host DNA polymerase to start replication. The sequence is that of Replication protein E1 from Macaca mulatta (Rhesus macaque).